We begin with the raw amino-acid sequence, 143 residues long: Large ribosomal subunit protein uL11 (143 aa).

The protein belongs to the universal ribosomal protein uL11 family. As to quaternary structure, part of the ribosomal stalk of the 50S ribosomal subunit. Interacts with L10 and the large rRNA to form the base of the stalk. L10 forms an elongated spine to which L12 dimers bind in a sequential fashion forming a multimeric L10(L12)X complex. In terms of processing, one or more lysine residues are methylated.

Its function is as follows. Forms part of the ribosomal stalk which helps the ribosome interact with GTP-bound translation factors. This is Large ribosomal subunit protein uL11 from Kocuria rhizophila (strain ATCC 9341 / DSM 348 / NBRC 103217 / DC2201).